The primary structure comprises 292 residues: Protease HtpX (292 aa).

A run of 2 helical transmembrane segments spans residues 5-25 (IFLF…VMSL) and 34-54 (SGLL…SLLL). His-140 contacts Zn(2+). Glu-141 is a catalytic residue. Position 144 (His-144) interacts with Zn(2+). Transmembrane regions (helical) follow at residues 155–175 (LLQG…GGII) and 193–213 (IIVF…AMWF). Position 218 (Glu-218) interacts with Zn(2+).

This sequence belongs to the peptidase M48B family. The cofactor is Zn(2+).

The protein localises to the cell inner membrane. This Xanthomonas axonopodis pv. citri (strain 306) protein is Protease HtpX.